The chain runs to 124 residues: Small ribosomal subunit protein uS12 (124 aa).

At Asp89 the chain carries 3-methylthioaspartic acid.

The protein belongs to the universal ribosomal protein uS12 family. Part of the 30S ribosomal subunit. Contacts proteins S8 and S17. May interact with IF1 in the 30S initiation complex.

Its function is as follows. With S4 and S5 plays an important role in translational accuracy. Interacts with and stabilizes bases of the 16S rRNA that are involved in tRNA selection in the A site and with the mRNA backbone. Located at the interface of the 30S and 50S subunits, it traverses the body of the 30S subunit contacting proteins on the other side and probably holding the rRNA structure together. The combined cluster of proteins S8, S12 and S17 appears to hold together the shoulder and platform of the 30S subunit. This chain is Small ribosomal subunit protein uS12, found in Caldanaerobacter subterraneus subsp. tengcongensis (strain DSM 15242 / JCM 11007 / NBRC 100824 / MB4) (Thermoanaerobacter tengcongensis).